Here is a 702-residue protein sequence, read N- to C-terminus: Penicillin-binding protein activator LpoA (702 aa).

Positions Met1–Gly26 are cleaved as a signal peptide. A lipid anchor (N-palmitoyl cysteine) is attached at Cys27. Residue Cys27 is the site of S-diacylglycerol cysteine attachment. Residues Gly327–Pro378 form a disordered region. The span at Ala330–Pro378 shows a compositional bias: low complexity.

Belongs to the LpoA family. As to quaternary structure, interacts with PBP1a.

It is found in the cell outer membrane. Its function is as follows. Regulator of peptidoglycan synthesis that is essential for the function of penicillin-binding protein 1A (PBP1a). This is Penicillin-binding protein activator LpoA from Klebsiella pneumoniae subsp. pneumoniae (strain ATCC 700721 / MGH 78578).